The following is a 282-amino-acid chain: N-acetylaspartate synthetase (282 aa).

The chain crosses the membrane as a helical span at residues 103 to 125 (FLTVMCYVMTKSFTLTFCAPFIL). Residues 110–269 (VMTKSFTLTF…RSPLERLFFQ (160 aa)) form the N-acetyltransferase domain.

Belongs to the NAT8 family.

Its subcellular location is the cytoplasm. The protein resides in the microsome membrane. It is found in the mitochondrion membrane. It localises to the endoplasmic reticulum membrane. It carries out the reaction L-aspartate + acetyl-CoA = N-acetyl-L-aspartate + CoA + H(+). In terms of biological role, catalyzes the synthesis of N-acetylaspartate acid (NAA) from L-aspartate and acetyl-CoA. This chain is N-acetylaspartate synthetase (nat8l), found in Danio rerio (Zebrafish).